Consider the following 115-residue polypeptide: uncharacterized protein (115 aa).

A run of 3 helical transmembrane segments spans residues 6–26, 43–63, and 84–104; these read ILIILVIILTTYFTRIWPFMV, ALSCSVIGMLVIYCFKDIHIL, and IFKVFVLSITLPTILYMVLVQ.

The protein belongs to the AzlD/HI_1737/HP1330 family.

The protein localises to the cell membrane. This is an uncharacterized protein from Helicobacter pylori (strain ATCC 700392 / 26695) (Campylobacter pylori).